The sequence spans 439 residues: Uracil-regulated protein 1 (439 aa).

Residues 1 to 24 (MLATEQSRPAECNGAHAHEKTEEV) form a disordered region. Position 268–272 (268–272 (RVHDE)) interacts with GTP. 3 residues coordinate Zn(2+): C273, C284, and C286. 315–317 (EGR) provides a ligand contact to GTP. D353 serves as the catalytic Proton acceptor. R355 functions as the Nucleophile in the catalytic mechanism. S377 and K382 together coordinate GTP.

Belongs to the GTP cyclohydrolase II family.

Its subcellular location is the cytoplasm. The protein resides in the nucleus. This chain is Uracil-regulated protein 1 (urg1), found in Schizosaccharomyces pombe (strain 972 / ATCC 24843) (Fission yeast).